The following is a 283-amino-acid chain: MAIKYFKPTTNGRRNMSSLDYSKNLTGHEPTKSLMTILKKKAGRNNSGQITTRHKGSGEKRKYRLVDFKRQKDNIEAIVKTIEYDPNRSANISLIVYKDGFKSYILYPKGLKVNDVIVSGEDVDIKIGNTLPLKNIPEGTFIHNIEMQPKGGAIIARSAGSSAQILGKDDNGKYVVLRLKSGETRRILAECRATIGVVGNEEHSLVNVGKAGRNRHKGIRPTVRGSAMNPNDHPHGGGEGKQPIGRKSPMTPWGRKALGPKTRKTNKSSTKLIIRGRKKRINN.

The disordered stretch occupies residues 215–283 (RHKGIRPTVR…IRGRKKRINN (69 aa)). The segment covering 274-283 (IRGRKKRINN) has biased composition (basic residues).

This sequence belongs to the universal ribosomal protein uL2 family. As to quaternary structure, part of the 50S ribosomal subunit. Forms a bridge to the 30S subunit in the 70S ribosome.

Its function is as follows. One of the primary rRNA binding proteins. Required for association of the 30S and 50S subunits to form the 70S ribosome, for tRNA binding and peptide bond formation. It has been suggested to have peptidyltransferase activity; this is somewhat controversial. Makes several contacts with the 16S rRNA in the 70S ribosome. This Mycoplasma mobile (strain ATCC 43663 / 163K / NCTC 11711) (Mesomycoplasma mobile) protein is Large ribosomal subunit protein uL2.